The chain runs to 300 residues: ETS homologous factor (300 aa).

In terms of domain architecture, PNT spans 29-115 (STCNVSSGFF…SNLQHLKWNG (87 aa)). Positions 183–202 (ESPDMKKEQDPPAKCHTKKH) are disordered. Over residues 185–195 (PDMKKEQDPPA) the composition is skewed to basic and acidic residues. The ETS DNA-binding region spans 207–289 (THLWEFIRDI…DGRRLVYKFG (83 aa)).

It belongs to the ETS family.

It is found in the nucleus. Functionally, transcriptional activator that may play a role in regulating epithelial cell differentiation and proliferation. May act as a repressor for a specific subset of ETS/AP-1-responsive genes, and as a modulator of the nuclear response to mitogen-activated protein kinase signaling cascades. Binds to DNA sequences containing the consensus nucleotide core sequence GGAA. Involved in regulation of TNFRSF10B/DR5 expression through Ets-binding sequences on the TNFRSF10B/DR5 promoter. The sequence is that of ETS homologous factor (EHF) from Pan troglodytes (Chimpanzee).